The chain runs to 279 residues: MVQIGPLAIRWYGVLLTLAIFLGYELARRRLRAWGWDLEPFERVVFWAVVFGVVGARLGYVLTSPGYFLENPLEALYIWHGGLSFHGAILGGGLTFYYFHRRRGYPLWPYLDAATPGVALGIVAGRIGNLMNGSDTAGRLTTLPIGFTWPEWARGFPGVCPGIDDISEVYRCAELLRGPVHLTQVYGAVVGLILLFLSLYWLRKRPFYGYAFWQFVLWYSVLRSVLEEPFRLNPLWLPVYRNDELGIGLFTATQVVSLPLVLLSLYMLRRLGKGEASRR.

A run of 4 helical transmembrane segments spans residues 4 to 24 (IGPL…FLGY), 44 to 64 (VVFW…VLTS), 76 to 96 (LYIW…GLTF), and 104 to 124 (GYPL…GIVA). Residue Arg-126 coordinates a 1,2-diacyl-sn-glycero-3-phospho-(1'-sn-glycerol). 3 consecutive transmembrane segments (helical) span residues 182–202 (LTQV…LYWL), 206–226 (PFYG…RSVL), and 245–265 (LGIG…LLSL).

This sequence belongs to the Lgt family.

Its subcellular location is the cell inner membrane. The enzyme catalyses L-cysteinyl-[prolipoprotein] + a 1,2-diacyl-sn-glycero-3-phospho-(1'-sn-glycerol) = an S-1,2-diacyl-sn-glyceryl-L-cysteinyl-[prolipoprotein] + sn-glycerol 1-phosphate + H(+). The protein operates within protein modification; lipoprotein biosynthesis (diacylglyceryl transfer). In terms of biological role, catalyzes the transfer of the diacylglyceryl group from phosphatidylglycerol to the sulfhydryl group of the N-terminal cysteine of a prolipoprotein, the first step in the formation of mature lipoproteins. This chain is Phosphatidylglycerol--prolipoprotein diacylglyceryl transferase, found in Thermus thermophilus (strain ATCC 27634 / DSM 579 / HB8).